The chain runs to 147 residues: uncharacterized protein (147 aa).

The HTH LytTR-type domain occupies 44–147 (LVGYIDKEIH…LKSIKERLSI (104 aa)).

It is found in the cytoplasm. This is an uncharacterized protein from Staphylococcus aureus (strain MW2).